Reading from the N-terminus, the 72-residue chain is EAGEECDCGAPENPCCDAATCKLRPGAQCAEGLCCDQCRFKGAGKICRRARGDNPDDRCTGQSADCPRNRFH.

A Disintegrin domain is found at 1–72; that stretch reads EAGEECDCGA…SADCPRNRFH (72 aa). 6 cysteine pairs are disulfide-bonded: Cys-6-Cys-21, Cys-8-Cys-16, Cys-15-Cys-38, Cys-29-Cys-35, Cys-34-Cys-59, and Cys-47-Cys-66. The Cell attachment site motif lies at 51 to 53; that stretch reads RGD. A disordered region spans residues 51 to 72; sequence RGDNPDDRCTGQSADCPRNRFH.

Belongs to the venom metalloproteinase (M12B) family. P-II subfamily. P-IIa sub-subfamily. In terms of assembly, monomer. As to expression, expressed by the venom gland.

The protein resides in the secreted. Functionally, inhibits fibrinogen interaction with platelets. Acts by binding to alpha-IIb/beta-3 (ITGA2B/ITGB3) on the platelet surface and inhibits aggregation induced by ADP, thrombin, platelet-activating factor and collagen. The protein is Disintegrin cotiarin of Bothrops cotiara (Cotiara).